Here is a 41-residue protein sequence, read N- to C-terminus: Photosystem I reaction center subunit IX (41 aa).

Residues 7–27 (YLSTAPVLLTLWMTFTAGFII) form a helical membrane-spanning segment.

Belongs to the PsaJ family.

It is found in the plastid. Its subcellular location is the chloroplast thylakoid membrane. Functionally, may help in the organization of the PsaE and PsaF subunits. The chain is Photosystem I reaction center subunit IX from Trieres chinensis (Marine centric diatom).